A 322-amino-acid polypeptide reads, in one-letter code: p55-v-Fos-transforming protein (322 aa).

The tract at residues 69–95 (APGGRGQSIGRRGKVEQLSPEEEEKRR) is disordered. In terms of domain architecture, bZIP spans 91–154 (EEKRRIRRER…EKLEFILAAH (64 aa)). A basic motif region spans residues 93–113 (KRRIRRERNKMAAAKCRNRRR). The leucine-zipper stretch occupies residues 119–147 (LQAETDQLEEEKSALQAEIANLLKEKEKL). The tract at residues 298–322 (AAHRKGSSSNEPSSDSLSSPTLLAL) is disordered. Residues 304-316 (SSSNEPSSDSLSS) show a composition bias toward low complexity.

This sequence belongs to the bZIP family. Fos subfamily.

The protein localises to the host nucleus. In Galliformes, this protein is p55-v-Fos-transforming protein (V-FOS).